The sequence spans 319 residues: UDP-N-acetylenolpyruvoylglucosamine reductase (319 aa).

Residues 35–198 form the FAD-binding PCMH-type domain; that stretch reads VGGPAEAMFK…TGCVLAGRPD (164 aa). Arg178 is an active-site residue. The Proton donor role is filled by Ser227. Residue Glu302 is part of the active site.

This sequence belongs to the MurB family. The cofactor is FAD.

It is found in the cytoplasm. It catalyses the reaction UDP-N-acetyl-alpha-D-muramate + NADP(+) = UDP-N-acetyl-3-O-(1-carboxyvinyl)-alpha-D-glucosamine + NADPH + H(+). It functions in the pathway cell wall biogenesis; peptidoglycan biosynthesis. Its function is as follows. Cell wall formation. This is UDP-N-acetylenolpyruvoylglucosamine reductase from Rhodospirillum rubrum (strain ATCC 11170 / ATH 1.1.1 / DSM 467 / LMG 4362 / NCIMB 8255 / S1).